A 180-amino-acid chain; its full sequence is Prorelaxin (180 aa).

An N-terminal signal peptide occupies residues Met-1–Ala-25. Disulfide bonds link Cys-33/Cys-167, Cys-45/Cys-180, and Cys-166/Cys-171. A propeptide spans Ser-53 to Ile-154 (connecting peptide).

It belongs to the insulin family. In terms of assembly, heterodimer of a B chain and an A chain linked by two disulfide bonds. Expressed by the placenta. Exclusively detected in cells located in the lamellar placental labyrinth and absent from other placental and non-placental uterine parts.

Its subcellular location is the secreted. Functionally, relaxin is an ovarian hormone that acts with estrogen to produce dilatation of the birth canal in many mammals. This chain is Prorelaxin (RLN), found in Felis catus (Cat).